The following is a 361-amino-acid chain: Phospho-N-acetylmuramoyl-pentapeptide-transferase (361 aa).

10 helical membrane-spanning segments follow: residues 27–47, 72–92, 99–119, 135–155, 169–189, 200–220, 240–260, 264–284, 289–309, and 338–358; these read GALFTAGLFVFWFGPWIISLL, TPTMGGLMILAGAVVAILLWA, VWVTLTVTLGFGAIGFYDDYL, LALEAVIAMAACVTIAVYSPA, ALLNLGWFYPLFGAFVIVGAG, GLAIVPVMIACGTFGFIAYLV, LAVVCGAVIGAGLGFLWFNAP, IFMGDTGSLALGGLLGSIAVA, IVLAIVGGLFVLEMMSVIIQV, and QVVIRFWIIAVILAMAGLATL.

This sequence belongs to the glycosyltransferase 4 family. MraY subfamily. Mg(2+) serves as cofactor.

It localises to the cell inner membrane. The enzyme catalyses UDP-N-acetyl-alpha-D-muramoyl-L-alanyl-gamma-D-glutamyl-meso-2,6-diaminopimeloyl-D-alanyl-D-alanine + di-trans,octa-cis-undecaprenyl phosphate = di-trans,octa-cis-undecaprenyl diphospho-N-acetyl-alpha-D-muramoyl-L-alanyl-D-glutamyl-meso-2,6-diaminopimeloyl-D-alanyl-D-alanine + UMP. The protein operates within cell wall biogenesis; peptidoglycan biosynthesis. Its function is as follows. Catalyzes the initial step of the lipid cycle reactions in the biosynthesis of the cell wall peptidoglycan: transfers peptidoglycan precursor phospho-MurNAc-pentapeptide from UDP-MurNAc-pentapeptide onto the lipid carrier undecaprenyl phosphate, yielding undecaprenyl-pyrophosphoryl-MurNAc-pentapeptide, known as lipid I. This chain is Phospho-N-acetylmuramoyl-pentapeptide-transferase, found in Methylobacterium radiotolerans (strain ATCC 27329 / DSM 1819 / JCM 2831 / NBRC 15690 / NCIMB 10815 / 0-1).